Consider the following 260-residue polypeptide: 14-3-3 protein 3 (260 aa).

The protein belongs to the 14-3-3 family. Homodimer.

This Solanum lycopersicum (Tomato) protein is 14-3-3 protein 3 (TFT3).